A 252-amino-acid polypeptide reads, in one-letter code: Imidazole glycerol phosphate synthase subunit HisF (252 aa).

Active-site residues include D11 and D130.

It belongs to the HisA/HisF family. Heterodimer of HisH and HisF.

It localises to the cytoplasm. It catalyses the reaction 5-[(5-phospho-1-deoxy-D-ribulos-1-ylimino)methylamino]-1-(5-phospho-beta-D-ribosyl)imidazole-4-carboxamide + L-glutamine = D-erythro-1-(imidazol-4-yl)glycerol 3-phosphate + 5-amino-1-(5-phospho-beta-D-ribosyl)imidazole-4-carboxamide + L-glutamate + H(+). It participates in amino-acid biosynthesis; L-histidine biosynthesis; L-histidine from 5-phospho-alpha-D-ribose 1-diphosphate: step 5/9. IGPS catalyzes the conversion of PRFAR and glutamine to IGP, AICAR and glutamate. The HisF subunit catalyzes the cyclization activity that produces IGP and AICAR from PRFAR using the ammonia provided by the HisH subunit. This chain is Imidazole glycerol phosphate synthase subunit HisF, found in Polynucleobacter necessarius subsp. necessarius (strain STIR1).